Consider the following 433-residue polypeptide: MAKIVKVIGREIIDSRGNPTVEAEVHLEGGFVGLAAAPSGASTGSREALELRDGDKSRFLGKGVLKAVAAVNNEIAQAIVGKEGCAQSEIDQTMIDLDGTENKSKFGANAILAVSLATAKAAAASKGLPLYAYIAELNGTPGVYSMPLPMMNIINGGEHADNNVDIQEFMIQPIGAKTLREALRIGAEVFHNLAKVLKAKGLSTAVGDEGGFAPNLASNADALACIKEAVENAGYVLGKDITLAMDCASSEFYNKENGLYEMKGEGKSFTSQEFTHYLENLCKEYPIVSIEDGQDESDWDGFAYQTKILGDKVQLVGDDLFVTNTKILKEGIEKGIANSILIKFNQIGSLTETLAAIKMAKDAGYTAVISHRSGETEDATIADLAVGTAAGQIKTGSMSRSDRIAKYNQLIRIEEALGEMAPFLGLKAIKGQA.

A (2R)-2-phosphoglycerate-binding site is contributed by Gln-167. Glu-209 acts as the Proton donor in catalysis. Mg(2+)-binding residues include Asp-246, Glu-291, and Asp-318. The (2R)-2-phosphoglycerate site is built by Lys-343, Arg-372, Ser-373, and Lys-394. Lys-343 acts as the Proton acceptor in catalysis.

It belongs to the enolase family. Component of the RNA degradosome, a multiprotein complex involved in RNA processing and mRNA degradation. It depends on Mg(2+) as a cofactor.

It localises to the cytoplasm. It is found in the secreted. Its subcellular location is the cell surface. It catalyses the reaction (2R)-2-phosphoglycerate = phosphoenolpyruvate + H2O. It functions in the pathway carbohydrate degradation; glycolysis; pyruvate from D-glyceraldehyde 3-phosphate: step 4/5. In terms of biological role, catalyzes the reversible conversion of 2-phosphoglycerate (2-PG) into phosphoenolpyruvate (PEP). It is essential for the degradation of carbohydrates via glycolysis. This Haemophilus ducreyi (strain 35000HP / ATCC 700724) protein is Enolase.